The following is a 135-amino-acid chain: Galectin-1 (135 aa).

At alanine 2 the chain carries N-acetylalanine. The region spanning 4-135 (GLVASNLNLK…DFKIKCVAFD (132 aa)) is the Galectin domain. Lysine 13 and lysine 29 each carry N6-acetyllysine. A Phosphoserine modification is found at serine 30. Residues 45–49 (HFNPR), histidine 53, asparagine 62, and 69–72 (WGAE) each bind a beta-D-galactoside. An N6-acetyllysine; alternate modification is found at lysine 108. Residue lysine 108 is modified to N6-succinyllysine; alternate. Lysine 128 carries the post-translational modification N6-acetyllysine.

In terms of assembly, homodimer. Binds LGALS3BP. Interacts with CD2, CD3, CD4, CD6, CD7, CD43, ALCAM and CD45. Interacts with laminin (via poly-N-acetyllactosamine). Interacts with SUSD2. Interacts with cargo receptor TMED10; the interaction mediates the translocation from the cytoplasm into the ERGIC (endoplasmic reticulum-Golgi intermediate compartment) and thereby secretion. The N-terminus is blocked.

The protein resides in the secreted. It is found in the extracellular space. It localises to the extracellular matrix. The protein localises to the cytoplasm. Functionally, lectin that binds beta-galactoside and a wide array of complex carbohydrates. Plays a role in regulating apoptosis, cell proliferation and cell differentiation. Inhibits CD45 protein phosphatase activity and therefore the dephosphorylation of Lyn kinase. Strong inducer of T-cell apoptosis. This is Galectin-1 from Bubalus bubalis (Domestic water buffalo).